A 440-amino-acid chain; its full sequence is T-box transcription factor TBX20 (440 aa).

Positions 103–282 (LWDKFHDLGT…SNPFAKGFRD (180 aa)) form a DNA-binding region, T-box.

Its subcellular location is the nucleus. Its function is as follows. Transcriptional regulator that may be involved in heart developmental processes. The polypeptide is T-box transcription factor TBX20 (tbx20) (Xenopus tropicalis (Western clawed frog)).